A 181-amino-acid polypeptide reads, in one-letter code: UPF0302 protein lin2035 (181 aa).

The protein belongs to the UPF0302 family.

In Listeria innocua serovar 6a (strain ATCC BAA-680 / CLIP 11262), this protein is UPF0302 protein lin2035.